Reading from the N-terminus, the 137-residue chain is Small ribosomal subunit protein uS11 (137 aa).

The tract at residues 1-30 (MAQAKKGGAPKKGQKTRRREKKNVPHGAAH) is disordered. Residues 8–21 (GAPKKGQKTRRREK) are compositionally biased toward basic residues.

Belongs to the universal ribosomal protein uS11 family. Part of the 30S ribosomal subunit. Interacts with proteins S7 and S18. Binds to IF-3.

Located on the platform of the 30S subunit, it bridges several disparate RNA helices of the 16S rRNA. Forms part of the Shine-Dalgarno cleft in the 70S ribosome. This is Small ribosomal subunit protein uS11 from Mycolicibacterium vanbaalenii (strain DSM 7251 / JCM 13017 / BCRC 16820 / KCTC 9966 / NRRL B-24157 / PYR-1) (Mycobacterium vanbaalenii).